We begin with the raw amino-acid sequence, 57 residues long: DNA-directed RNA polymerase subunit Rpo6 (57 aa).

This sequence belongs to the archaeal Rpo6/eukaryotic RPB6 RNA polymerase subunit family. Part of the RNA polymerase complex.

Its subcellular location is the cytoplasm. The enzyme catalyses RNA(n) + a ribonucleoside 5'-triphosphate = RNA(n+1) + diphosphate. Its function is as follows. DNA-dependent RNA polymerase (RNAP) catalyzes the transcription of DNA into RNA using the four ribonucleoside triphosphates as substrates. The chain is DNA-directed RNA polymerase subunit Rpo6 from Methanocaldococcus jannaschii (strain ATCC 43067 / DSM 2661 / JAL-1 / JCM 10045 / NBRC 100440) (Methanococcus jannaschii).